The following is a 53-amino-acid chain: Tsetse thrombin inhibitor (53 aa).

Residues Met-1–Pro-21 form the signal peptide.

Expressed at high levels in salivary glands and midguts of adult tsetse flies.

The protein localises to the secreted. Potent and specific inhibitor of human thrombin. It is also a potent inhibitor of thrombin-induced platelet aggregation. It is capable of antagonizing host hemostasis and facilitating blood feeding. This is Tsetse thrombin inhibitor (TTI) from Glossina morsitans morsitans (Savannah tsetse fly).